The primary structure comprises 336 residues: MLPFLPEPSLSYTQQNRTAVLLLNLGTPDAPTAQAVRPYLKSFLTDRRIVELPKWLWYPILHGLVLTFRPKKSAHAYEKIWFKEGSPLEVYTARQAAALAERMPDLIVRHAMTYGNPSIADVLAELKSQGVGRLLAIPLYPQYAASSSGAAVDKVCEQLLLQRNQMSVRTISRFYDDAGYIDAMKNHILRYWAEHGRGKKLMLSFHGVPQKHYDLGDPYPDECRHTAKLLAEALELTEDEYTVSFQSQFGRAKWVTPSTQDLFGKLPKQGVTELDVFCPGFLADCLETMEEIALMGREQFYEAGGKNYRYIPCLNDNPDWIDALVALAEENLGGWR.

Residues His206 and Glu287 each coordinate Fe cation.

It belongs to the ferrochelatase family.

The protein resides in the cytoplasm. The enzyme catalyses heme b + 2 H(+) = protoporphyrin IX + Fe(2+). It participates in porphyrin-containing compound metabolism; protoheme biosynthesis; protoheme from protoporphyrin-IX: step 1/1. In terms of biological role, catalyzes the ferrous insertion into protoporphyrin IX. This Neisseria gonorrhoeae (strain ATCC 700825 / FA 1090) protein is Ferrochelatase.